We begin with the raw amino-acid sequence, 276 residues long: Dermonecrotic toxin LvSicTox-alphaII1 (276 aa).

The active site involves histidine 5. Residues glutamate 25 and aspartate 27 each contribute to the Mg(2+) site. Histidine 41 acts as the Nucleophile in catalysis. Disulfide bonds link cysteine 45–cysteine 51 and cysteine 47–cysteine 193. Aspartate 85 contributes to the Mg(2+) binding site.

It belongs to the arthropod phospholipase D family. Class II subfamily. Mg(2+) serves as cofactor. In terms of tissue distribution, expressed by the venom gland.

Its subcellular location is the secreted. It catalyses the reaction an N-(acyl)-sphingosylphosphocholine = an N-(acyl)-sphingosyl-1,3-cyclic phosphate + choline. The catalysed reaction is an N-(acyl)-sphingosylphosphoethanolamine = an N-(acyl)-sphingosyl-1,3-cyclic phosphate + ethanolamine. The enzyme catalyses a 1-acyl-sn-glycero-3-phosphocholine = a 1-acyl-sn-glycero-2,3-cyclic phosphate + choline. It carries out the reaction a 1-acyl-sn-glycero-3-phosphoethanolamine = a 1-acyl-sn-glycero-2,3-cyclic phosphate + ethanolamine. Its function is as follows. Dermonecrotic toxins cleave the phosphodiester linkage between the phosphate and headgroup of certain phospholipids (sphingolipid and lysolipid substrates), forming an alcohol (often choline) and a cyclic phosphate. This toxin acts on sphingomyelin (SM). It may also act on ceramide phosphoethanolamine (CPE), lysophosphatidylcholine (LPC) and lysophosphatidylethanolamine (LPE), but not on lysophosphatidylserine (LPS), and lysophosphatidylglycerol (LPG). It acts by transphosphatidylation, releasing exclusively cyclic phosphate products as second products. Induces dermonecrosis, hemolysis, increased vascular permeability, edema, inflammatory response, and platelet aggregation. The protein is Dermonecrotic toxin LvSicTox-alphaII1 of Loxosceles variegata (Recluse spider).